The primary structure comprises 179 residues: Hypoxanthine-guanine phosphoribosyltransferase (179 aa).

Diphosphate contacts are provided by Lys-42 and Gly-43. 2 residues coordinate Mg(2+): Glu-98 and Asp-99. Glu-102 acts as the Proton acceptor in catalysis. Residues Lys-130, 151–152, and Asp-158 contribute to the GMP site; that span reads FV. Position 164 (Arg-164) interacts with diphosphate.

It belongs to the purine/pyrimidine phosphoribosyltransferase family. The cofactor is Mg(2+).

It localises to the cytoplasm. The enzyme catalyses IMP + diphosphate = hypoxanthine + 5-phospho-alpha-D-ribose 1-diphosphate. It catalyses the reaction GMP + diphosphate = guanine + 5-phospho-alpha-D-ribose 1-diphosphate. The protein operates within purine metabolism; IMP biosynthesis via salvage pathway; IMP from hypoxanthine: step 1/1. It participates in purine metabolism; GMP biosynthesis via salvage pathway; GMP from guanine: step 1/1. Purine salvage pathway enzyme that catalyzes the transfer of the ribosyl-5-phosphate group from 5-phospho-alpha-D-ribose 1-diphosphate (PRPP) to the N9 position of the 6-oxopurines hypoxanthine and guanine to form the corresponding ribonucleotides IMP (inosine 5'-monophosphate) and GMP (guanosine 5'-monophosphate), with the release of PPi. The chain is Hypoxanthine-guanine phosphoribosyltransferase (hpt) from Staphylococcus aureus (strain COL).